The following is a 369-amino-acid chain: Phospho-N-acetylmuramoyl-pentapeptide-transferase (369 aa).

10 helical membrane passes run 2 to 22 (IALL…TPLF), 55 to 75 (TVVV…MWMM), 86 to 106 (GLLL…DDFI), 120 to 140 (AKLI…LQFP), 163 to 183 (LAFG…NLII), 196 to 216 (LDGL…IMGI), 239 to 259 (PMDL…FLWW), 266 to 286 (IFMG…FAIL), 291 to 311 (LLLA…IIQV), and 348 to 368 (ILAG…WVVL).

The protein belongs to the glycosyltransferase 4 family. MraY subfamily. Mg(2+) serves as cofactor.

It is found in the cell membrane. The enzyme catalyses UDP-N-acetyl-alpha-D-muramoyl-L-alanyl-gamma-D-glutamyl-meso-2,6-diaminopimeloyl-D-alanyl-D-alanine + di-trans,octa-cis-undecaprenyl phosphate = di-trans,octa-cis-undecaprenyl diphospho-N-acetyl-alpha-D-muramoyl-L-alanyl-D-glutamyl-meso-2,6-diaminopimeloyl-D-alanyl-D-alanine + UMP. Its pathway is cell wall biogenesis; peptidoglycan biosynthesis. Its function is as follows. Catalyzes the initial step of the lipid cycle reactions in the biosynthesis of the cell wall peptidoglycan: transfers peptidoglycan precursor phospho-MurNAc-pentapeptide from UDP-MurNAc-pentapeptide onto the lipid carrier undecaprenyl phosphate, yielding undecaprenyl-pyrophosphoryl-MurNAc-pentapeptide, known as lipid I. This chain is Phospho-N-acetylmuramoyl-pentapeptide-transferase, found in Paenarthrobacter aurescens (strain TC1).